Here is a 291-residue protein sequence, read N- to C-terminus: Proteasome subunit beta (291 aa).

A propeptide spans 1-57 (MTWPLPDRLSINSLSGTPAVDLSSFTDFLRRQAPELLPASISGGAPLAGGDAQLPHG) (removed in mature form; by autocatalysis). The Nucleophile role is filled by T58.

The protein belongs to the peptidase T1B family. In terms of assembly, the 20S proteasome core is composed of 14 alpha and 14 beta subunits that assemble into four stacked heptameric rings, resulting in a barrel-shaped structure. The two inner rings, each composed of seven catalytic beta subunits, are sandwiched by two outer rings, each composed of seven alpha subunits. The catalytic chamber with the active sites is on the inside of the barrel. Has a gated structure, the ends of the cylinder being occluded by the N-termini of the alpha-subunits. Is capped by the proteasome-associated ATPase, ARC.

It is found in the cytoplasm. It catalyses the reaction Cleavage of peptide bonds with very broad specificity.. It functions in the pathway protein degradation; proteasomal Pup-dependent pathway. The formation of the proteasomal ATPase ARC-20S proteasome complex, likely via the docking of the C-termini of ARC into the intersubunit pockets in the alpha-rings, may trigger opening of the gate for substrate entry. Interconversion between the open-gate and close-gate conformations leads to a dynamic regulation of the 20S proteasome proteolysis activity. Its function is as follows. Component of the proteasome core, a large protease complex with broad specificity involved in protein degradation. The sequence is that of Proteasome subunit beta from Mycobacterium tuberculosis (strain ATCC 25177 / H37Ra).